The primary structure comprises 245 residues: MSQSTSVLRRNGFTFKQFFVAHDRCAMKVGTDGILLGAWAPVAGVKRCLDIGAGSGLLALMLAQRTSDSVIIDAVELESEAAAQAQENINQSPWAERINVHTADIQQWLTQQTVRFDLIISNPPYYQQGVECAIPQREQARYTTTLDHPSLLTCAAECITEEGFFCVVLPEQIGNGFTELALSMGWHLRLRTDVAENEARLPHRVLLAFSPQAGECFSDRLVIRGPDQNYSEAYTALTQAFYLFM.

Belongs to the methyltransferase superfamily. tRNA (adenine-N(6)-)-methyltransferase family.

It localises to the cytoplasm. It carries out the reaction adenosine(37) in tRNA1(Val) + S-adenosyl-L-methionine = N(6)-methyladenosine(37) in tRNA1(Val) + S-adenosyl-L-homocysteine + H(+). Specifically methylates the adenine in position 37 of tRNA(1)(Val) (anticodon cmo5UAC). The sequence is that of tRNA1(Val) (adenine(37)-N6)-methyltransferase from Shigella boydii serotype 18 (strain CDC 3083-94 / BS512).